Here is a 322-residue protein sequence, read N- to C-terminus: tRNA U34 carboxymethyltransferase (322 aa).

Carboxy-S-adenosyl-L-methionine contacts are provided by residues lysine 92, tryptophan 106, lysine 111, glycine 131, 153–155 (DPS), 181–182 (VE), methionine 196, tyrosine 200, and arginine 315.

This sequence belongs to the class I-like SAM-binding methyltransferase superfamily. CmoB family. As to quaternary structure, homotetramer.

It carries out the reaction carboxy-S-adenosyl-L-methionine + 5-hydroxyuridine(34) in tRNA = 5-carboxymethoxyuridine(34) in tRNA + S-adenosyl-L-homocysteine + H(+). In terms of biological role, catalyzes carboxymethyl transfer from carboxy-S-adenosyl-L-methionine (Cx-SAM) to 5-hydroxyuridine (ho5U) to form 5-carboxymethoxyuridine (cmo5U) at position 34 in tRNAs. This chain is tRNA U34 carboxymethyltransferase, found in Pseudoalteromonas translucida (strain TAC 125).